The chain runs to 284 residues: MDGIKKKMIAMKLEKENAMERAVQYEELLKKKEEEREKRESEIAELNNKMKQAQIDCDEAQETLQEQMNKLEETDKRATNAEAEVAAMTRRIRLLEEDLEVSSSRLTETLTKLEEASKTAEESERGRKDLEIRSIADDERLNQLEDQQKEAKYIAEDADRKYDEAARKLAIAEVDFERAEARLEAAESKIVELEEELRVVGNNMKALEISEQESAQREESYEETIRDLTERLKAAEQRATEAERQVSKLQNEVDHLEDDLLAEKERYKALSGELDQTFAELTGY.

A coiled-coil region spans residues 1–284 (MDGIKKKMIA…DQTFAELTGY (284 aa)). The disordered stretch occupies residues 111-131 (TKLEEASKTAEESERGRKDLE).

The protein belongs to the tropomyosin family. As to quaternary structure, homodimer.

Functionally, tropomyosin, in association with the troponin complex, plays a central role in the calcium dependent regulation of muscle contraction. This chain is Tropomyosin-1, found in Schistosoma mansoni (Blood fluke).